Here is a 610-residue protein sequence, read N- to C-terminus: UvrABC system protein C (610 aa).

The 79-residue stretch at 16–94 (NQPGVYRMYD…IKRYQPRYNV (79 aa)) folds into the GIY-YIG domain. Positions 204–239 (SQVIDALVARMEEASRALRFEEAARLRDQIQAVRRV) constitute a UVR domain.

This sequence belongs to the UvrC family. Interacts with UvrB in an incision complex.

Its subcellular location is the cytoplasm. The UvrABC repair system catalyzes the recognition and processing of DNA lesions. UvrC both incises the 5' and 3' sides of the lesion. The N-terminal half is responsible for the 3' incision and the C-terminal half is responsible for the 5' incision. This Edwardsiella ictaluri (strain 93-146) protein is UvrABC system protein C.